Consider the following 278-residue polypeptide: MVRVIAISNLRLAQAFVDYMATRHVALEVKPDSQGAEIWLTDDEQLPQVQHELEQFLLDPLNPRYQAASWQSGNLHSNLPYQRFSYLQTLRSQAGPLTLSVMVLCIAIYILMQIVGDGAVMSWLAWPRDNSQYLQIWRWVSHAFLHFSLLHILFNLMWWWYLAGQMEKRLGTGKLLVLTIVSALFSGWGQSLFSGVNFGGLSGVVYALMGYVWLTGERAPERGISLPRGLMAFSVLWLVAGYFDILGLSIANAAHVSGLIIGLLMAFWDTRNSAKTTQ.

6 helical membrane passes run 95–115 (GPLTLSVMVLCIAIYILMQIV), 143–163 (AFLHFSLLHILFNLMWWWYLA), 170–190 (LGTGKLLVLTIVSALFSGWGQ), 192–212 (LFSGVNFGGLSGVVYALMGYV), 224–241 (ISLPRGLMAFSVLWLVAG), and 245–267 (ILGLSIANAAHVSGLIIGLLMAF). The active-site Nucleophile is the S202. The active site involves H255.

It belongs to the peptidase S54 family.

The protein localises to the cell inner membrane. It carries out the reaction Cleaves type-1 transmembrane domains using a catalytic dyad composed of serine and histidine that are contributed by different transmembrane domains.. In terms of biological role, rhomboid-type serine protease that catalyzes intramembrane proteolysis. The chain is Rhomboid protease GlpG from Yersinia enterocolitica serotype O:8 / biotype 1B (strain NCTC 13174 / 8081).